Here is a 243-residue protein sequence, read N- to C-terminus: 3-deoxy-manno-octulosonate cytidylyltransferase (243 aa).

It belongs to the KdsB family.

Its subcellular location is the cytoplasm. It catalyses the reaction 3-deoxy-alpha-D-manno-oct-2-ulosonate + CTP = CMP-3-deoxy-beta-D-manno-octulosonate + diphosphate. Its pathway is nucleotide-sugar biosynthesis; CMP-3-deoxy-D-manno-octulosonate biosynthesis; CMP-3-deoxy-D-manno-octulosonate from 3-deoxy-D-manno-octulosonate and CTP: step 1/1. It participates in bacterial outer membrane biogenesis; lipopolysaccharide biosynthesis. Functionally, activates KDO (a required 8-carbon sugar) for incorporation into bacterial lipopolysaccharide in Gram-negative bacteria. The sequence is that of 3-deoxy-manno-octulosonate cytidylyltransferase from Helicobacter acinonychis (strain Sheeba).